The sequence spans 476 residues: Doublecortin domain-containing protein 2 (476 aa).

Doublecortin domains lie at 17-100 (KSVL…LNYL) and 139-221 (CTIF…LPYS). Residues 234-476 (FGQKASSLPP…QQNKDYAAVA (243 aa)) form a disordered region. Over residues 261–272 (STVGSSDNSSPQ) the composition is skewed to polar residues. S270 is subject to Phosphoserine. The span at 279 to 289 (KKEDVNSEKLT) shows a compositional bias: basic and acidic residues. Residues 296-306 (KLKNSQETIPN) show a composition bias toward polar residues. Positions 354–366 (EKANKDAEQKEDF) are enriched in basic and acidic residues. The segment covering 415 to 426 (ELQQVNNELQLV) has biased composition (low complexity). Positions 446 to 455 (DPQRPPRPEV) are enriched in basic and acidic residues.

In terms of assembly, interacts with DVL1, DVL2 and DVL3. As to expression, ubiquitously expressed. In brain, highly expressed in the entorhinal cortex, inferior temporal cortex, medial temporal cortex, hypothalamus, amygdala and hippocampus. Expressed in liver by cholangiocytes, the epithelial cells of the bile ducts (at protein level).

It localises to the cell projection. It is found in the cilium. The protein localises to the cytoplasm. The protein resides in the cytoskeleton. Its subcellular location is the cilium axoneme. It localises to the kinocilium. Its function is as follows. Protein that plays a role in the inhibition of canonical Wnt signaling pathway. May be involved in neuronal migration during development of the cerebral neocortex. Involved in the control of ciliogenesis and ciliary length. This is Doublecortin domain-containing protein 2 (DCDC2) from Homo sapiens (Human).